The chain runs to 297 residues: Eukaryotic translation initiation factor 3 subunit G (297 aa).

Over residues 1–10 (MAAVQQKHDW) the composition is skewed to basic and acidic residues. The segment at 1–35 (MAAVQQKHDWADDDELEETSTELPPPQKITNKDGS) is disordered. Acidic residues predominate over residues 11-20 (ADDDELEETS). The RRM domain occupies 217 to 295 (ATLRVTNVSE…LILRVEFAKK (79 aa)).

This sequence belongs to the eIF-3 subunit G family. Component of the eukaryotic translation initiation factor 3 (eIF-3) complex.

The protein resides in the cytoplasm. Functionally, RNA-binding component of the eukaryotic translation initiation factor 3 (eIF-3) complex, which is involved in protein synthesis of a specialized repertoire of mRNAs and, together with other initiation factors, stimulates binding of mRNA and methionyl-tRNAi to the 40S ribosome. The eIF-3 complex specifically targets and initiates translation of a subset of mRNAs involved in cell proliferation. This subunit can bind 18S rRNA. The chain is Eukaryotic translation initiation factor 3 subunit G (eif3g) from Neurospora crassa (strain ATCC 24698 / 74-OR23-1A / CBS 708.71 / DSM 1257 / FGSC 987).